We begin with the raw amino-acid sequence, 591 residues long: Probable sulfoacetaldehyde acetyltransferase (591 aa).

The segment at 359–383 is disordered; that stretch reads MDHEDDDPGTEWNVGARQREPDRMS.

This sequence belongs to the TPP enzyme family. The cofactor is Mg(2+). It depends on thiamine diphosphate as a cofactor.

The protein resides in the cytoplasm. The catalysed reaction is acetyl phosphate + sulfite + H(+) = sulfoacetaldehyde + phosphate. The protein operates within organosulfur degradation; taurine degradation via aerobic pathway; acetyl phosphate and sulfite from taurine: step 2/2. The polypeptide is Probable sulfoacetaldehyde acetyltransferase (xsc) (Rhizobium meliloti (strain 1021) (Ensifer meliloti)).